A 292-amino-acid polypeptide reads, in one-letter code: Probable xyloglucan endotransglucosylase/hydrolase protein 6 (292 aa).

The signal sequence occupies residues 1–30; it reads MAKIYSPSFPGTLCLCIFTLLTLMFIRVSA. The GH16 domain occupies 31–224; sequence RPATFVEDFK…WSKAPFYAYY (194 aa). Catalysis depends on Glu-110, which acts as the Nucleophile. Residue Glu-114 is the Proton donor of the active site. Glu-114 is a binding site for xyloglucan. An N-linked (GlcNAc...) asparagine glycan is attached at Asn-118. Xyloglucan-binding positions include 127 to 129, 137 to 139, 203 to 204, and Gly-208; these read QTN, DRE, and DW. Disulfide bonds link Cys-232–Cys-240 and Cys-277–Cys-290. Arg-282 is a xyloglucan binding site.

It belongs to the glycosyl hydrolase 16 family. XTH group 1 subfamily. Post-translationally, contains at least one intrachain disulfide bond essential for its enzymatic activity.

The protein localises to the secreted. It localises to the cell wall. Its subcellular location is the extracellular space. The protein resides in the apoplast. The catalysed reaction is breaks a beta-(1-&gt;4) bond in the backbone of a xyloglucan and transfers the xyloglucanyl segment on to O-4 of the non-reducing terminal glucose residue of an acceptor, which can be a xyloglucan or an oligosaccharide of xyloglucan.. Functionally, catalyzes xyloglucan endohydrolysis (XEH) and/or endotransglycosylation (XET). Cleaves and religates xyloglucan polymers, an essential constituent of the primary cell wall, and thereby participates in cell wall construction of growing tissues. In Arabidopsis thaliana (Mouse-ear cress), this protein is Probable xyloglucan endotransglucosylase/hydrolase protein 6 (XTH6).